The chain runs to 252 residues: Phosphoglycolate phosphatase (252 aa).

The Nucleophile role is filled by Asp13. Positions 13, 15, and 192 each coordinate Mg(2+).

Belongs to the HAD-like hydrolase superfamily. CbbY/CbbZ/Gph/YieH family. As to quaternary structure, monomer. The cofactor is Mg(2+). Requires chloride as cofactor.

The enzyme catalyses 2-phosphoglycolate + H2O = glycolate + phosphate. It functions in the pathway organic acid metabolism; glycolate biosynthesis; glycolate from 2-phosphoglycolate: step 1/1. Its function is as follows. Specifically catalyzes the dephosphorylation of 2-phosphoglycolate. Is involved in the dissimilation of the intracellular 2-phosphoglycolate formed during the DNA repair of 3'-phosphoglycolate ends, a major class of DNA lesions induced by oxidative stress. The sequence is that of Phosphoglycolate phosphatase from Shigella sonnei (strain Ss046).